A 559-amino-acid polypeptide reads, in one-letter code: Dihydroxy-acid dehydratase (559 aa).

C56 is a [2Fe-2S] cluster binding site. D88 is a binding site for Mg(2+). C129 provides a ligand contact to [2Fe-2S] cluster. The Mg(2+) site is built by D130 and K131. Residue K131 is modified to N6-carboxylysine. C198 is a binding site for [2Fe-2S] cluster. Residue E449 coordinates Mg(2+). The active-site Proton acceptor is S475.

The protein belongs to the IlvD/Edd family. As to quaternary structure, homodimer. The cofactor is [2Fe-2S] cluster. Mg(2+) serves as cofactor.

The enzyme catalyses (2R)-2,3-dihydroxy-3-methylbutanoate = 3-methyl-2-oxobutanoate + H2O. It catalyses the reaction (2R,3R)-2,3-dihydroxy-3-methylpentanoate = (S)-3-methyl-2-oxopentanoate + H2O. It functions in the pathway amino-acid biosynthesis; L-isoleucine biosynthesis; L-isoleucine from 2-oxobutanoate: step 3/4. Its pathway is amino-acid biosynthesis; L-valine biosynthesis; L-valine from pyruvate: step 3/4. Functions in the biosynthesis of branched-chain amino acids. Catalyzes the dehydration of (2R,3R)-2,3-dihydroxy-3-methylpentanoate (2,3-dihydroxy-3-methylvalerate) into 2-oxo-3-methylpentanoate (2-oxo-3-methylvalerate) and of (2R)-2,3-dihydroxy-3-methylbutanoate (2,3-dihydroxyisovalerate) into 2-oxo-3-methylbutanoate (2-oxoisovalerate), the penultimate precursor to L-isoleucine and L-valine, respectively. This is Dihydroxy-acid dehydratase from Ruthia magnifica subsp. Calyptogena magnifica.